The sequence spans 223 residues: Thylakoid lumenal 15.0 kDa protein 2, chloroplastic (223 aa).

The protein localises to the plastid. Its subcellular location is the chloroplast thylakoid lumen. This Arabidopsis thaliana (Mouse-ear cress) protein is Thylakoid lumenal 15.0 kDa protein 2, chloroplastic.